The chain runs to 577 residues: MSTLPISSVSFSSSTSPLVVDDKVSTKPDVIRHTMNFNASIWGDQFLTYDEPEDLVMKKQLVEELKEEVKKELITIKGSNEPMQHVKLIELIDAVQRLGIAYHFEEEIEEALQHIHVTYGEQWVDKENLQSISLWFRLLRQQGFNVSSGVFKDFMDEKGKFKESLCNDAQGILALYEAAFMRVEDETILDNALEFTKVHLDIIAKDPSCDSSLRTQIHQALKQPLRRRLARIEALHYMPIYQQETSHNEDLLKLAKLDFSVLQSMHKKELSHICKWWKDLDLQNKLPYVRDRVVEGYFWILSIYYEPQHARTRMFLMKTCMWLVVLDDTFDNYGTYEELEIFTQAVERWSISCLDMLPEYMKLIYQELVNLHVEMEESLGKGGKNISNSLCQGRWQKELGSQITLVETKMAKRGVHAQPLEEYMSVSMVTGTYGLMIARSYVGRGDIVTEDTFKWVSSYPPIIKASCVIVRLMDDIVSHKEEQERGHVASSIECYSKESGASEEEACEYISRKVEDAWKVINRESLRPTAVPFPLLMPAINLARMCEVLYSVNDGFTHAEGDMKSYMKSFFVHPMVV.

Residues aspartate 327, aspartate 331, aspartate 474, serine 478, and glutamate 482 each coordinate Mg(2+). The short motif at aspartate 327–aspartate 331 is the DDXXD motif element.

The protein belongs to the terpene synthase family. Mg(2+) serves as cofactor. Requires Co(2+) as cofactor. It depends on Mn(2+) as a cofactor. In terms of tissue distribution, expressed in flowers.

Its subcellular location is the cytoplasm. It catalyses the reaction (2E,6E)-farnesyl diphosphate = (E)-beta-farnesene + diphosphate. The protein operates within secondary metabolite biosynthesis; terpenoid biosynthesis. With respect to regulation, strongly inhibited by manganese at concentration higher than 20 uM. Functionally, sesquiterpene cyclase catalyzing the production of beta-farnesene from farnesyl diphosphate. Unable to use geranyl diphosphate as substrate. The sequence is that of (E)-beta-farnesene synthase (CASC125) from Artemisia annua (Sweet wormwood).